A 78-amino-acid chain; its full sequence is Antitoxin VapB1 (78 aa).

Residues 3–44 (TKVFQSGNSQAVRIPMDFRFDVDTVEIFRKENGDVVLRPVSK) enclose the SpoVT-AbrB domain.

This sequence belongs to the VapB family. As to quaternary structure, forms multimers, as well forming as a complex with VapC1.

Antitoxin component of a type II toxin-antitoxin (TA) system. Upon expression in E.coli neutralizes the effect of toxin VapC1. In vitro inhibits the RNase activity of VapC1. This chain is Antitoxin VapB1 (vapB1), found in Haemophilus influenzae (strain R2866).